A 203-amino-acid chain; its full sequence is Glycerol-3-phosphate acyltransferase (203 aa).

6 consecutive transmembrane segments (helical) span residues 5–25 (IASI…FSLL), 50–70 (TCGF…GALP), 72–92 (IAAQ…TAAM), 115–135 (VVLT…AVTF), 140–160 (ISAV…AVLL), and 162–182 (LGML…AIVF).

Belongs to the PlsY family. Probably interacts with PlsX.

The protein localises to the cell membrane. The enzyme catalyses an acyl phosphate + sn-glycerol 3-phosphate = a 1-acyl-sn-glycero-3-phosphate + phosphate. The protein operates within lipid metabolism; phospholipid metabolism. Catalyzes the transfer of an acyl group from acyl-phosphate (acyl-PO(4)) to glycerol-3-phosphate (G3P) to form lysophosphatidic acid (LPA). This enzyme utilizes acyl-phosphate as fatty acyl donor, but not acyl-CoA or acyl-ACP. In Roseiflexus sp. (strain RS-1), this protein is Glycerol-3-phosphate acyltransferase.